Here is a 441-residue protein sequence, read N- to C-terminus: Methylenetetrahydrofolate--tRNA-(uracil-5-)-methyltransferase TrmFO (441 aa).

11-16 (GAGLAG) lines the FAD pocket.

This sequence belongs to the MnmG family. TrmFO subfamily. It depends on FAD as a cofactor.

The protein resides in the cytoplasm. It catalyses the reaction uridine(54) in tRNA + (6R)-5,10-methylene-5,6,7,8-tetrahydrofolate + NADH + H(+) = 5-methyluridine(54) in tRNA + (6S)-5,6,7,8-tetrahydrofolate + NAD(+). The catalysed reaction is uridine(54) in tRNA + (6R)-5,10-methylene-5,6,7,8-tetrahydrofolate + NADPH + H(+) = 5-methyluridine(54) in tRNA + (6S)-5,6,7,8-tetrahydrofolate + NADP(+). Its function is as follows. Catalyzes the folate-dependent formation of 5-methyl-uridine at position 54 (M-5-U54) in all tRNAs. This Lactiplantibacillus plantarum (strain ATCC BAA-793 / NCIMB 8826 / WCFS1) (Lactobacillus plantarum) protein is Methylenetetrahydrofolate--tRNA-(uracil-5-)-methyltransferase TrmFO.